The sequence spans 610 residues: Glutamine--fructose-6-phosphate aminotransferase [isomerizing] (610 aa).

Residue C2 is the Nucleophile; for GATase activity of the active site. Residues C2 to R218 enclose the Glutamine amidotransferase type-2 domain. SIS domains lie at A286–R426 and L459–P600. The For Fru-6P isomerization activity role is filled by K605.

Homodimer.

It is found in the cytoplasm. The enzyme catalyses D-fructose 6-phosphate + L-glutamine = D-glucosamine 6-phosphate + L-glutamate. In terms of biological role, catalyzes the first step in hexosamine metabolism, converting fructose-6P into glucosamine-6P using glutamine as a nitrogen source. This chain is Glutamine--fructose-6-phosphate aminotransferase [isomerizing], found in Aliivibrio fischeri (strain ATCC 700601 / ES114) (Vibrio fischeri).